The chain runs to 623 residues: MNRLRVARLTPLELLLSLMSLLLGTRPHGSPGPLQCYSVGPLGILNCSWEPLGDLETPPVLYHQSQKYHPNRVWEVKVPSKQSWVTIPREQFTMADKLLIWGTQKGRPLWSSVSVNLETQMKPDTPQIFSQVDISEEATLEATVQWAPPVWPPQKVLICQFRYKECQAETWTRLEPQLKTDGLTPVEMQNLEPGTCYQVSGRCQVENGYPWGEWSSPLSFQTPFLDPEDVWVSGTVCETSGKRAALLVWKDPRPCVQVTYTVWFGAGDITTTQEEVPCCKSPVPAWMEWAVVSPGNSTSWVPPTNLSLVCLAPESAPCDVGVSSADGSPGIKVTWKQGTRKPLEYVVDWAQDGDSLDKLNWTRLPPGNLSTLLPGEFKGGVPYRITVTAVYSGGLAAAPSVWGFREELVPLAGPAVWRLPDDPPGTPVVAWGEVPRHQLRGQATHYTFCIQSRGLSTVCRNVSSQTQTATLPNLHLGSFKLWVTVSTVAGQGPPGPNLSLHLPDNRIRWKALPWFLSLWGLLLMGCGLSLASTRCLQARCLHWRHKLLPQWIWERVPDPANSNSGQPYIKEVSLPQPPKDGPILEVEEVELQPVVESPKASAPIYSGYEKHFLPTPEELGLLV.

Positions 1 to 24 (MNRLRVARLTPLELLLSLMSLLLG) are cleaved as a signal peptide. At 25–510 (TRPHGSPGPL…HLPDNRIRWK (486 aa)) the chain is on the extracellular side. 2 Fibronectin type-III domains span residues 30 to 124 (SPGP…MKPD) and 125 to 225 (TPQI…TPFL). The N-linked (GlcNAc...) asparagine glycan is linked to Asn-46. The WSXWS motif motif lies at 211-215 (WGEWS). Asn-296, Asn-305, Asn-360, Asn-368, and Asn-461 each carry an N-linked (GlcNAc...) asparagine glycan. Fibronectin type-III domains lie at 316 to 412 (APCD…VPLA) and 413 to 505 (GPAV…LPDN). A helical transmembrane segment spans residues 511-531 (ALPWFLSLWGLLLMGCGLSLA). Over 532 to 623 (STRCLQARCL…PTPEELGLLV (92 aa)) the chain is Cytoplasmic. The Box 1 motif signature appears at 552 to 560 (IWERVPDPA).

This sequence belongs to the type I cytokine receptor family. Type 2 subfamily. Expressed in CD4+ and CD8+ T-cells, B-cells, natural killer cells and macrophages. Highest levels in CD4+ T-cells and natural killer cells. Expression highest in Th0 cells.

Its subcellular location is the membrane. Functionally, receptor for IL27. Requires IL6ST/GP130 to mediate signal transduction in response to IL27. This signaling system acts through STAT3 and STAT1. Involved in the regulation of Th1-type immune responses. Also appears to be involved in innate defense mechanisms. The chain is Interleukin-27 receptor subunit alpha (Il27ra) from Mus musculus (Mouse).